The chain runs to 319 residues: Pectinesterase (319 aa).

A Pyrrolidone carboxylic acid modification is found at Gln-1. Positions 83 and 113 each coordinate substrate. The Proton donor role is filled by Asp-136. Cys-150 and Cys-170 are joined by a disulfide. The Nucleophile role is filled by Asp-157. Substrate-binding residues include Arg-225 and Trp-227.

Belongs to the pectinesterase family.

It is found in the secreted. Its subcellular location is the cell wall. The catalysed reaction is [(1-&gt;4)-alpha-D-galacturonosyl methyl ester](n) + n H2O = [(1-&gt;4)-alpha-D-galacturonosyl](n) + n methanol + n H(+). It functions in the pathway glycan metabolism; pectin degradation; 2-dehydro-3-deoxy-D-gluconate from pectin: step 1/5. Functionally, catalyzes the deesterification of methyl-esterified D-galactosiduronic acid units in pectic compounds. It participates in modulating cell wall during fruit ripening, cell wall extension during pollen germination, and in defense mechanisms against pathogens. The protein is Pectinesterase of Daucus carota (Wild carrot).